The following is a 422-amino-acid chain: Regulator of sigma-W protease RasP (422 aa).

4 helical membrane passes run 6–26 (VIAF…GHLL), 175–195 (IAAG…MLGL), 346–366 (IVNL…VNLL), and 394–414 (EAFV…VVTW). His-20 is a binding site for Zn(2+). Residue Glu-21 is part of the active site. His-24 provides a ligand contact to Zn(2+). The 86-residue stretch at 186 to 271 (AYVILVMLGL…TLHISVTPEA (86 aa)) folds into the PDZ domain.

The protein belongs to the peptidase M50B family. Zn(2+) serves as cofactor.

It localises to the cell membrane. In terms of biological role, is responsible for site-2 cleavage of the RsiW anti-sigma factor. This results, after a third proteolytic step catalyzed by the ClpXP protease, in the release of SigW and the transcription activation of the genes under the control of the sigma-W factor. Can also cleave liberated signal peptides of PenP and Mpr, probably within in the cell membrane. The chain is Regulator of sigma-W protease RasP from Bacillus subtilis (strain 168).